A 225-amino-acid polypeptide reads, in one-letter code: tRNA (guanine-N(1)-)-methyltransferase (225 aa).

Residues glycine 112 and 132 to 137 (IGDYVL) contribute to the S-adenosyl-L-methionine site.

The protein belongs to the RNA methyltransferase TrmD family. Homodimer.

Its subcellular location is the cytoplasm. The catalysed reaction is guanosine(37) in tRNA + S-adenosyl-L-methionine = N(1)-methylguanosine(37) in tRNA + S-adenosyl-L-homocysteine + H(+). Functionally, specifically methylates guanosine-37 in various tRNAs. The polypeptide is tRNA (guanine-N(1)-)-methyltransferase (Bacteroides fragilis (strain ATCC 25285 / DSM 2151 / CCUG 4856 / JCM 11019 / LMG 10263 / NCTC 9343 / Onslow / VPI 2553 / EN-2)).